Here is a 101-residue protein sequence, read N- to C-terminus: Large ribosomal subunit protein bL27 (101 aa).

The propeptide occupies 1–9 (MLLMNLQLF).

Belongs to the bacterial ribosomal protein bL27 family. Post-translationally, the N-terminus is cleaved by ribosomal processing cysteine protease Prp.

The polypeptide is Large ribosomal subunit protein bL27 (Clostridium tetani (strain Massachusetts / E88)).